Here is a 353-residue protein sequence, read N- to C-terminus: 3-isopropylmalate dehydrogenase (353 aa).

76 to 89 is an NAD(+) binding site; it reads GPKWDDPRAKVRPE. 4 residues coordinate substrate: Arg96, Arg106, Arg134, and Asp223. Mg(2+) is bound by residues Asp223, Asp247, and Asp251. An NAD(+)-binding site is contributed by 281 to 293; the sequence is GSAPDIAGKGIAN.

It belongs to the isocitrate and isopropylmalate dehydrogenases family. LeuB type 1 subfamily. As to quaternary structure, homodimer. The cofactor is Mg(2+). Mn(2+) serves as cofactor.

The protein resides in the cytoplasm. The catalysed reaction is (2R,3S)-3-isopropylmalate + NAD(+) = 4-methyl-2-oxopentanoate + CO2 + NADH. It participates in amino-acid biosynthesis; L-leucine biosynthesis; L-leucine from 3-methyl-2-oxobutanoate: step 3/4. Functionally, catalyzes the oxidation of 3-carboxy-2-hydroxy-4-methylpentanoate (3-isopropylmalate) to 3-carboxy-4-methyl-2-oxopentanoate. The product decarboxylates to 4-methyl-2 oxopentanoate. The sequence is that of 3-isopropylmalate dehydrogenase from Anaeromyxobacter dehalogenans (strain 2CP-C).